A 50-amino-acid polypeptide reads, in one-letter code: MAERVIITLACSVCKNRNYYFDRAKNHEGKLALKKFCKNCGKRTDHKETK.

It belongs to the bacterial ribosomal protein bL33 family.

The chain is Large ribosomal subunit protein bL33 from Endomicrobium trichonymphae.